The primary structure comprises 76 residues: Conotoxin VnMSGL-0112 (76 aa).

An N-terminal signal peptide occupies residues Met-1–Ser-20. Positions His-21–Arg-45 are excised as a propeptide. 3 disulfides stabilise this stretch: Cys-49-Cys-61, Cys-53-Cys-70, and Cys-60-Cys-74.

It belongs to the conotoxin O3 superfamily. In terms of tissue distribution, expressed by the venom duct.

Its subcellular location is the secreted. The chain is Conotoxin VnMSGL-0112 from Conus ventricosus (Mediterranean cone).